Consider the following 83-residue polypeptide: Exodeoxyribonuclease 7 small subunit (83 aa).

It belongs to the XseB family. As to quaternary structure, heterooligomer composed of large and small subunits.

It localises to the cytoplasm. It carries out the reaction Exonucleolytic cleavage in either 5'- to 3'- or 3'- to 5'-direction to yield nucleoside 5'-phosphates.. Bidirectionally degrades single-stranded DNA into large acid-insoluble oligonucleotides, which are then degraded further into small acid-soluble oligonucleotides. This chain is Exodeoxyribonuclease 7 small subunit, found in Rhizobium etli (strain ATCC 51251 / DSM 11541 / JCM 21823 / NBRC 15573 / CFN 42).